The sequence spans 345 residues: Tyrosine-binding protein (345 aa).

An N-terminal signal peptide occupies residues 1–23 (MIKSKKILSLIIAGVLGVSMLTG). C24 carries the N-palmitoyl cysteine lipid modification. C24 carries S-diacylglycerol cysteine lipidation.

The complex is probably composed of two ATP-binding proteins (CDR20291_0806), two transmembrane proteins (CDR20291_0807) and a solute-binding protein (CDR20291_0805).

The protein resides in the cell membrane. Probably part of an ABC transporter complex involved in tyrosine uptake. May also import phenylalanine. The chain is Tyrosine-binding protein from Clostridioides difficile (strain R20291) (Peptoclostridium difficile).